The chain runs to 378 residues: Cytochrome b (378 aa).

A run of 4 helical transmembrane segments spans residues 34–54 (FGSL…FLAM), 78–99 (WFLR…FIHV), 114–134 (WMIG…GYVL), and 179–199 (FFTF…IHLL). Residues His-84 and His-98 each coordinate heme b. Heme b is bound by residues His-183 and His-197. His-202 lines the a ubiquinone pocket. 4 helical membrane-spanning segments follow: residues 227-247 (YKDI…IWKF), 289-309 (LGGV…PFTH), 321-341 (LNQI…WIGA), and 348-368 (YVLT…INPL).

This sequence belongs to the cytochrome b family. The main subunits of complex b-c1 are: cytochrome b, cytochrome c1 and the Rieske protein. Heme b is required as a cofactor.

It is found in the mitochondrion inner membrane. Component of the ubiquinol-cytochrome c reductase complex (complex III or cytochrome b-c1 complex) that is part of the mitochondrial respiratory chain. The b-c1 complex mediates electron transfer from ubiquinol to cytochrome c. Contributes to the generation of a proton gradient across the mitochondrial membrane that is then used for ATP synthesis. This chain is Cytochrome b, found in Aedes aegypti (Yellowfever mosquito).